The chain runs to 171 residues: AN1-type zinc finger protein 2A (171 aa).

2 AN1-type zinc fingers span residues 4–52 (PDLG…KKDV) and 94–142 (KVFT…SSVS). Zn(2+) contacts are provided by cysteine 10, cysteine 15, cysteine 25, cysteine 28, cysteine 33, histidine 36, histidine 42, cysteine 44, cysteine 100, cysteine 105, cysteine 115, cysteine 118, cysteine 123, histidine 126, histidine 132, and cysteine 134. Residues 135–171 (QAGSSSVSRGRSSASRAAEQKPSGVSWLAQRLRRTVK) are disordered. Residues 136 to 151 (AGSSSVSRGRSSASRA) show a composition bias toward low complexity.

It localises to the cytoplasm. It is found in the nucleus. The polypeptide is AN1-type zinc finger protein 2A (Zfand2a) (Rattus norvegicus (Rat)).